The primary structure comprises 213 residues: Probable septum site-determining protein MinC (213 aa).

This sequence belongs to the MinC family. Interacts with MinD and FtsZ.

Its function is as follows. Cell division inhibitor that blocks the formation of polar Z ring septums. Rapidly oscillates between the poles of the cell to destabilize FtsZ filaments that have formed before they mature into polar Z rings. Prevents FtsZ polymerization. The protein is Probable septum site-determining protein MinC of Pseudothermotoga lettingae (strain ATCC BAA-301 / DSM 14385 / NBRC 107922 / TMO) (Thermotoga lettingae).